A 68-amino-acid polypeptide reads, in one-letter code: Peptide TsPep3 (68 aa).

A signal peptide spans 1–26; it reads MKLSCGFLLIFLVLSAMIATFSEVEA. 4 cysteine pairs are disulfide-bonded: Cys30–Cys38, Cys33–Cys54, Cys37–Cys47, and Cys42–Cys52. The propeptide occupies 56 to 68; that stretch reads GRSDLNEEFENYQ.

In terms of tissue distribution, expressed by the venom gland.

It localises to the secreted. Its function is as follows. Probable weak potassium channel blocker. This chain is Peptide TsPep3, found in Tityus serrulatus (Brazilian scorpion).